Reading from the N-terminus, the 203-residue chain is Holliday junction branch migration complex subunit RuvA (203 aa).

Residues 1-63 are domain I; it reads MIGKLSGKID…EEHIHLYGFL (63 aa). The segment at 64–142 is domain II; sequence TIEEKNFFNL…KISTGAAIIN (79 aa). A flexible linker region spans residues 143–149; sequence DSLNIKN. Residues 150 to 203 are domain III; sequence ITSVASNEVIKALVNLGFSRFEAQNSVQGIVIQNPEISIDELIKTALKNRNAGL.

Belongs to the RuvA family. As to quaternary structure, homotetramer. Forms an RuvA(8)-RuvB(12)-Holliday junction (HJ) complex. HJ DNA is sandwiched between 2 RuvA tetramers; dsDNA enters through RuvA and exits via RuvB. An RuvB hexamer assembles on each DNA strand where it exits the tetramer. Each RuvB hexamer is contacted by two RuvA subunits (via domain III) on 2 adjacent RuvB subunits; this complex drives branch migration. In the full resolvosome a probable DNA-RuvA(4)-RuvB(12)-RuvC(2) complex forms which resolves the HJ.

The protein resides in the cytoplasm. Functionally, the RuvA-RuvB-RuvC complex processes Holliday junction (HJ) DNA during genetic recombination and DNA repair, while the RuvA-RuvB complex plays an important role in the rescue of blocked DNA replication forks via replication fork reversal (RFR). RuvA specifically binds to HJ cruciform DNA, conferring on it an open structure. The RuvB hexamer acts as an ATP-dependent pump, pulling dsDNA into and through the RuvAB complex. HJ branch migration allows RuvC to scan DNA until it finds its consensus sequence, where it cleaves and resolves the cruciform DNA. This is Holliday junction branch migration complex subunit RuvA from Rickettsia akari (strain Hartford).